A 240-amino-acid chain; its full sequence is Small ribosomal subunit protein uS2 (240 aa).

The protein belongs to the universal ribosomal protein uS2 family. In terms of assembly, component of the small ribosomal subunit. Mature ribosomes consist of a small (40S) and a large (60S) subunit. The 40S subunit contains about 33 different proteins and 1 molecule of RNA (18S). The 60S subunit contains about 49 different proteins and 3 molecules of RNA (25S, 5.8S and 5S). Interacts with RPS21.

The protein localises to the cytoplasm. In terms of biological role, required for the assembly and/or stability of the 40S ribosomal subunit. Required for the processing of the 20S rRNA-precursor to mature 18S rRNA in a late step of the maturation of 40S ribosomal subunits. The chain is Small ribosomal subunit protein uS2 from Enterocytozoon bieneusi (strain H348) (Microsporidian parasite).